Reading from the N-terminus, the 402-residue chain is MAAGGGLSRSERKAAERVRRLREEQQRERLRQVSRILRKAAAERSAEEGRLLAESEDLVTELQGRSRRREGLKRRQEEVCDDPEELRRKVRELAGAVRSARHLVVYTGAGISTAASIPDYRGPNGVWTLLQKGRPVSAADLSEAEPTLTHMSITRLHEQKLVQHVVSQNCDGLHLRSGLPRTAISELHGNMYIEVCTSCIPNREYVRVFDVTERTALHRHLTGRTCHKCGTQLRDTIVHFGERGTLGQPLNWEAATEAASKADTILCLGSSLKVLKKYPRLWCMTKPPSRRPKLYIVNLQWTPKDDWAALKLHGKCDDVMQLLMNELGLEIPVYNRWQDPIFSLATPLRAGEEGSHSRKSLCRSREEAPPGDQSDPLASAPPILGGWFGRGCAKRAKRKKVA.

The interval M1–E23 is disordered. Residues R9–E23 show a composition bias toward basic and acidic residues. One can recognise a Deacetylase sirtuin-type domain in the interval P83–E330. NAD(+) contacts are provided by residues G108 to W127 and Q168 to D171. Residue H188 is the Proton acceptor of the active site. Zn(2+) contacts are provided by C196, C199, C226, and C229. NAD(+) is bound by residues G269–S271, N298–Q300, and C316. Positions S355–A402 are disordered. At R390 the chain carries Asymmetric dimethylarginine; alternate. R390 carries the omega-N-methylarginine; alternate modification. Over residues C392 to A402 the composition is skewed to basic residues.

Belongs to the sirtuin family. Class IV subfamily. In terms of assembly, interacts with UBTF and the RNA polymerase I complex. Interacts with components of the B-WICH complex, such as MYBBP1A, SMARCA5/SNF2H and BAZ1B/WSTF. Interacts with ELK4, leading to stabilization at target promoters for H3K18Ac deacetylation. Interacts with histone H2A and/or histone H2B. Interacts with DNMT1. Interacts with SIRT1. Requires Zn(2+) as cofactor. Phosphorylated during mitosis. Post-translationally, methylation at Arg-390 by PRMT6 inhibits the H3K18Ac histone deacetylase activity, promoting mitochondria biogenesis and maintaining mitochondria respiration. In terms of processing, ubiquitinated via 'Lys-63'-linked ubiquitin chains. Deubiquitinated by USP7, inhibiting the H3K18Ac histone deacetylase activity and regulating gluconeogenesis. Ubiquitinated by E3 ubiquitin-protein ligase complex containing FBXO7; leading to proteasomal degradation. As to expression, detected in liver, spleen and testis. Detected in embryos.

It is found in the nucleus. The protein localises to the nucleolus. The protein resides in the nucleoplasm. Its subcellular location is the chromosome. It localises to the cytoplasm. It carries out the reaction N(6)-acetyl-L-lysyl-[protein] + NAD(+) + H2O = 2''-O-acetyl-ADP-D-ribose + nicotinamide + L-lysyl-[protein]. The catalysed reaction is N(6)-glutaryl-L-lysyl-[protein] + NAD(+) + H2O = 2''-O-glutaryl-ADP-D-ribose + nicotinamide + L-lysyl-[protein]. It catalyses the reaction N(6)-succinyl-L-lysyl-[protein] + NAD(+) + H2O = 2''-O-succinyl-ADP-D-ribose + nicotinamide + L-lysyl-[protein]. The enzyme catalyses N(6)-propanoyl-L-lysyl-[protein] + NAD(+) + H2O = 3''-O-propanoyl-ADP-D-ribose + nicotinamide + L-lysyl-[protein]. It carries out the reaction N(6)-decanoyl-L-lysyl-[protein] + NAD(+) + H2O = 2''-O-decanoyl-ADP-D-ribose + nicotinamide + L-lysyl-[protein]. With respect to regulation, NAD-dependent protein-lysine deacetylase and deacylase activities are activated by nucleic acids. Histone deacetylase activity is activated by DNA. Protein-lysine deacylase activity is activated by RNA. H3K18Ac histone deacetylase activity is inhibited by methylation at Arg-390. H3K18Ac histone deacetylase activity is inhibited by deubiquitination by USP7. In terms of biological role, NAD-dependent protein-lysine deacylase that can act both as a deacetylase or deacylase (desuccinylase, depropionylase and deglutarylase), depending on the context. Also acts as a dedecanoylase. Specifically mediates deacetylation of histone H3 at 'Lys-18' (H3K18Ac). In contrast to other histone deacetylases, displays strong preference for a specific histone mark, H3K18Ac, directly linked to control of gene expression. H3K18Ac is mainly present around the transcription start site of genes and has been linked to activation of nuclear hormone receptors; SIRT7 thereby acts as a transcription repressor. Moreover, H3K18 hypoacetylation has been reported as a marker of malignancy in various cancers and seems to maintain the transformed phenotype of cancer cells. Also able to mediate deacetylation of histone H3 at 'Lys-36' (H3K36Ac) in the context of nucleosomes. Also mediates deacetylation of non-histone proteins, such as ATM, CDK9, DDX21, DDB1, FBL, FKBP5/FKBP51, GABPB1, RAN, RRP9/U3-55K and POLR1E/PAF53. Enriched in nucleolus where it stimulates transcription activity of the RNA polymerase I complex. Acts by mediating the deacetylation of the RNA polymerase I subunit POLR1E/PAF53, thereby promoting the association of RNA polymerase I with the rDNA promoter region and coding region. In response to metabolic stress, SIRT7 is released from nucleoli leading to hyperacetylation of POLR1E/PAF53 and decreased RNA polymerase I transcription. Required to restore the transcription of ribosomal RNA (rRNA) at the exit from mitosis. Promotes pre-ribosomal RNA (pre-rRNA) cleavage at the 5'-terminal processing site by mediating deacetylation of RRP9/U3-55K, a core subunit of the U3 snoRNP complex. Mediates 'Lys-37' deacetylation of Ran, thereby regulating the nuclear export of NF-kappa-B subunit RELA/p65. Acts as a regulator of DNA damage repair by mediating deacetylation of ATM during the late stages of DNA damage response, promoting ATM dephosphorylation and deactivation. May also deacetylate p53/TP53 and promotes cell survival, however such data need additional confirmation. Suppresses the activity of the DCX (DDB1-CUL4-X-box) E3 ubiquitin-protein ligase complexes by mediating deacetylation of DDB1, which prevents the interaction between DDB1 and CUL4 (CUL4A or CUL4B). Activates RNA polymerase II transcription by mediating deacetylation of CDK9, thereby promoting 'Ser-2' phosphorylation of the C-terminal domain (CTD) of RNA polymerase II. Deacetylates FBL, promoting histone-glutamine methyltransferase activity of FBL. Acts as a regulator of mitochondrial function by catalyzing deacetylation of GABPB1. Regulates Akt/AKT1 activity by mediating deacetylation of FKBP5/FKBP51. Required to prevent R-loop-associated DNA damage and transcription-associated genomic instability by mediating deacetylation and subsequent activation of DDX21, thereby overcoming R-loop-mediated stalling of RNA polymerases. In addition to protein deacetylase activity, also acts as protein-lysine deacylase. Acts as a protein depropionylase by mediating depropionylation of Osterix (SP7), thereby regulating bone formation by osteoblasts. Acts as a histone deglutarylase by mediating deglutarylation of histone H4 on 'Lys-91' (H4K91glu); a mark that destabilizes nucleosomes by promoting dissociation of the H2A-H2B dimers from nucleosomes. Acts as a histone desuccinylase: in response to DNA damage, recruited to DNA double-strand breaks (DSBs) and catalyzes desuccinylation of histone H3 on 'Lys-122' (H3K122succ), thereby promoting chromatin condensation and DSB repair. Also promotes DSB repair by promoting H3K18Ac deacetylation, regulating non-homologous end joining (NHEJ). Along with its role in DNA repair, required for chromosome synapsis during prophase I of female meiosis by catalyzing H3K18Ac deacetylation. Involved in transcriptional repression of LINE-1 retrotransposon via H3K18Ac deacetylation, and promotes their association with the nuclear lamina. Required to stabilize ribosomal DNA (rDNA) heterochromatin and prevent cellular senescence induced by rDNA instability. Acts as a negative regulator of SIRT1 by preventing autodeacetylation of SIRT1, restricting SIRT1 deacetylase activity. The protein is NAD-dependent protein deacetylase sirtuin-7 of Mus musculus (Mouse).